The sequence spans 87 residues: Large ribosomal subunit protein bL31B (87 aa).

It belongs to the bacterial ribosomal protein bL31 family. Type B subfamily. In terms of assembly, part of the 50S ribosomal subunit.

The protein is Large ribosomal subunit protein bL31B of Burkholderia ambifaria (strain MC40-6).